We begin with the raw amino-acid sequence, 419 residues long: Large ribosomal subunit protein uL4 (419 aa).

Alanine 2 carries the post-translational modification N-acetylalanine. At lysine 14 the chain carries N6-acetyllysine. Arginine 97 is subject to Omega-N-methylarginine. Lysine 106 is modified (N6-acetyllysine). Lysine 239 participates in a covalent cross-link: Glycyl lysine isopeptide (Lys-Gly) (interchain with G-Cter in SUMO2). Residue lysine 259 is modified to N6-acetyllysine. The residue at position 266 (threonine 266) is a Phosphothreonine. Phosphoserine occurs at positions 290 and 295. Arginine 300 is subject to Citrulline. A Glycyl lysine isopeptide (Lys-Gly) (interchain with G-Cter in SUMO2) cross-link involves residue lysine 327. An N6-acetyllysine mark is found at lysine 333 and lysine 353. Lysine 364 carries the N6-acetyllysine; alternate modification. Lysine 364 participates in a covalent cross-link: Glycyl lysine isopeptide (Lys-Gly) (interchain with G-Cter in SUMO1); alternate. Residues 364-379 (KSEKVVPEKGTADKKP) are compositionally biased toward basic and acidic residues. The interval 364–419 (KSEKVVPEKGTADKKPAVGKKGKKVDAKKQKPAGKKVVAKKPAEKKPTTEEKKPAA) is disordered. A Phosphoserine modification is found at serine 365. A compositionally biased stretch (basic residues) spans 393 to 402 (QKPAGKKVVA). Basic and acidic residues predominate over residues 404-419 (KPAEKKPTTEEKKPAA).

The protein belongs to the universal ribosomal protein uL4 family. Component of the large ribosomal subunit. May bind IPO9 with low affinity. Interacts with RBM3. In terms of processing, citrullinated by PADI4.

Its subcellular location is the cytoplasm. Component of the large ribosomal subunit. The ribosome is a large ribonucleoprotein complex responsible for the synthesis of proteins in the cell. The sequence is that of Large ribosomal subunit protein uL4 (Rpl4) from Mus musculus (Mouse).